The following is a 250-amino-acid chain: 3-deoxy-manno-octulosonate cytidylyltransferase (250 aa).

Belongs to the KdsB family.

The protein localises to the cytoplasm. It carries out the reaction 3-deoxy-alpha-D-manno-oct-2-ulosonate + CTP = CMP-3-deoxy-beta-D-manno-octulosonate + diphosphate. It functions in the pathway nucleotide-sugar biosynthesis; CMP-3-deoxy-D-manno-octulosonate biosynthesis; CMP-3-deoxy-D-manno-octulosonate from 3-deoxy-D-manno-octulosonate and CTP: step 1/1. It participates in bacterial outer membrane biogenesis; lipopolysaccharide biosynthesis. In terms of biological role, activates KDO (a required 8-carbon sugar) for incorporation into bacterial lipopolysaccharide in Gram-negative bacteria. The sequence is that of 3-deoxy-manno-octulosonate cytidylyltransferase from Francisella tularensis subsp. tularensis (strain FSC 198).